The following is a 217-amino-acid chain: Choline transport system permease protein OpuBB (217 aa).

Residues 19-198 form the ABC transmembrane type-1 domain; sequence TYEHITISLI…ILAIVIDYVL (180 aa). Transmembrane regions (helical) follow at residues 23 to 43, 52 to 74, 84 to 101, 128 to 148, 150 to 170, and 180 to 200; these read ITIS…LGVV, GTII…AFFI, AIVA…RNTY, LVEL…STIY, IGWA…YIFI, and IIGG…VLAV.

This sequence belongs to the binding-protein-dependent transport system permease family. CysTW subfamily.

It localises to the cell membrane. Involved in a high affinity multicomponent binding-protein-dependent transport system for choline; probably responsible for the translocation of the substrate across the membrane. In Bacillus subtilis (strain 168), this protein is Choline transport system permease protein OpuBB (opuBB).